The sequence spans 334 residues: D-fructose 1,6-bisphosphatase class 2/sedoheptulose 1,7-bisphosphatase (334 aa).

D33, E57, D85, and E88 together coordinate Mn(2+). Substrate contacts are provided by residues E88 to T90, Y119, R164 to R166, and D186 to D188. Mn(2+) is bound at residue E213.

The protein belongs to the FBPase class 2 family. Homotetramer. Mn(2+) serves as cofactor.

The catalysed reaction is beta-D-fructose 1,6-bisphosphate + H2O = beta-D-fructose 6-phosphate + phosphate. It carries out the reaction D-sedoheptulose 1,7-bisphosphate + H2O = D-sedoheptulose 7-phosphate + phosphate. The protein operates within carbohydrate biosynthesis; Calvin cycle. Functionally, catalyzes the hydrolysis of fructose 1,6-bisphosphate (Fru 1,6-P2) and sedoheptulose 1,7-bisphosphate (Sed 1,7-P2) to fructose 6-phosphate and sedoheptulose 7-phosphate, respectively. The protein is D-fructose 1,6-bisphosphatase class 2/sedoheptulose 1,7-bisphosphatase of Prochlorococcus marinus (strain NATL1A).